The following is a 554-amino-acid chain: CTP synthase (554 aa).

Residues M1–I270 form an amidoligase domain region. Residue S13 coordinates CTP. S13 provides a ligand contact to UTP. ATP is bound by residues S14–I19 and D71. The Mg(2+) site is built by D71 and E144. CTP-binding positions include D151–E153, K191–Q196, and K227. UTP is bound by residues K191–Q196 and K227. The Glutamine amidotransferase type-1 domain occupies T295 to R547. Position 356 (G356) interacts with L-glutamine. The active-site Nucleophile; for glutamine hydrolysis is C383. L-glutamine contacts are provided by residues L384–Q387, E407, and R473. Active-site residues include H520 and E522.

This sequence belongs to the CTP synthase family. In terms of assembly, homotetramer.

It catalyses the reaction UTP + L-glutamine + ATP + H2O = CTP + L-glutamate + ADP + phosphate + 2 H(+). The enzyme catalyses L-glutamine + H2O = L-glutamate + NH4(+). The catalysed reaction is UTP + NH4(+) + ATP = CTP + ADP + phosphate + 2 H(+). It participates in pyrimidine metabolism; CTP biosynthesis via de novo pathway; CTP from UDP: step 2/2. Its activity is regulated as follows. Allosterically activated by GTP, when glutamine is the substrate; GTP has no effect on the reaction when ammonia is the substrate. The allosteric effector GTP functions by stabilizing the protein conformation that binds the tetrahedral intermediate(s) formed during glutamine hydrolysis. Inhibited by the product CTP, via allosteric rather than competitive inhibition. Catalyzes the ATP-dependent amination of UTP to CTP with either L-glutamine or ammonia as the source of nitrogen. Regulates intracellular CTP levels through interactions with the four ribonucleotide triphosphates. In Ralstonia nicotianae (strain ATCC BAA-1114 / GMI1000) (Ralstonia solanacearum), this protein is CTP synthase.